Here is a 288-residue protein sequence, read N- to C-terminus: 3'-5' exonuclease (288 aa).

Residues 30–67 (RSSSSSSSAAPTVQATTSVHGHEEDPNQIPNNIRRQLP) are disordered. 2 stretches are compositionally biased toward polar residues: residues 38–48 (AAPTVQATTSV) and 57–67 (QIPNNIRRQLP). The region spanning 129 to 279 (FVGLDIEWRP…ASWHLYKVLK (151 aa)) is the 3'-5' exonuclease domain.

In terms of assembly, interacts with KU70 and KU80. Interacts with RECQL2. The cofactor is Mg(2+). It depends on Mn(2+) as a cofactor. As to expression, expressed ubiquitously.

The protein resides in the nucleus. Activated upon interaction with the KU heterodimer. Not stimulated by ATP. Its function is as follows. Exonuclease that digests recessed strands of DNA duplexes in the 3' to 5' direction but hardly single-stranded DNA or blunt-ended duplexes. Also able to digest 3'-protruding strands and 3'-recessed strand termini of duplexes containing mismatched bases. The protein is 3'-5' exonuclease (WEX) of Arabidopsis thaliana (Mouse-ear cress).